The following is a 138-amino-acid chain: ATP synthase epsilon chain (138 aa).

Belongs to the ATPase epsilon chain family. F-type ATPases have 2 components, CF(1) - the catalytic core - and CF(0) - the membrane proton channel. CF(1) has five subunits: alpha(3), beta(3), gamma(1), delta(1), epsilon(1). CF(0) has three main subunits: a, b and c.

It localises to the cell inner membrane. Its function is as follows. Produces ATP from ADP in the presence of a proton gradient across the membrane. The protein is ATP synthase epsilon chain of Psychrobacter arcticus (strain DSM 17307 / VKM B-2377 / 273-4).